A 412-amino-acid polypeptide reads, in one-letter code: Transcription termination factor 3, mitochondrial (412 aa).

The transit peptide at 1–67 directs the protein to the mitochondrion; the sequence is MALLAQQLPR…IKTYRTLFWN (67 aa).

The protein belongs to the mTERF family.

The protein resides in the mitochondrion. Functionally, binds promoter DNA and regulates initiation of transcription. Required for normal mitochondrial transcription and translation, and for normal assembly of mitochondrial respiratory complexes. Required for normal mitochondrial function. Maintains 16S rRNA levels and functions in mitochondrial ribosome assembly by regulating the biogenesis of the 39S ribosomal subunit. This is Transcription termination factor 3, mitochondrial (Mterf3) from Mus musculus (Mouse).